The following is a 425-amino-acid chain: Glucan 1,3-beta-glucosidase (425 aa).

The N-terminal stretch at 1 to 19 (MNLTLLLLALIFSPSLIFS) is a signal peptide. Catalysis depends on Glu219, which acts as the Proton donor. Intrachain disulfides connect Cys301/Cys423 and Cys326/Cys352. The active-site Nucleophile is the Glu318.

Belongs to the glycosyl hydrolase 5 (cellulase A) family.

It localises to the secreted. It carries out the reaction Successive hydrolysis of beta-D-glucose units from the non-reducing ends of (1-&gt;3)-beta-D-glucans, releasing alpha-glucose.. In terms of biological role, beta-glucanases participate in the metabolism of beta-glucan, the main structural component of the cell wall. It could also function biosynthetically as a transglycosylase. The protein is Glucan 1,3-beta-glucosidase of Schwanniomyces occidentalis (Yeast).